Reading from the N-terminus, the 807-residue chain is Glycerol-3-phosphate acyltransferase (807 aa).

The HXXXXD motif signature appears at 308-313 (CHRSHM).

Belongs to the GPAT/DAPAT family.

It is found in the cell inner membrane. The enzyme catalyses sn-glycerol 3-phosphate + an acyl-CoA = a 1-acyl-sn-glycero-3-phosphate + CoA. It participates in phospholipid metabolism; CDP-diacylglycerol biosynthesis; CDP-diacylglycerol from sn-glycerol 3-phosphate: step 1/3. This is Glycerol-3-phosphate acyltransferase from Shewanella woodyi (strain ATCC 51908 / MS32).